Reading from the N-terminus, the 586-residue chain is Penicillin-binding protein activator LpoA (586 aa).

The N-terminal stretch at 1–26 (MLSILMQGLRLKKCFLPILVMFFLAG) is a signal peptide. Cysteine 27 carries the N-palmitoyl cysteine lipid modification. Cysteine 27 carries S-diacylglycerol cysteine lipidation.

It belongs to the LpoA family. Interacts with PBP1a.

It is found in the cell outer membrane. Its function is as follows. Regulator of peptidoglycan synthesis that is essential for the function of penicillin-binding protein 1A (PBP1a). In Histophilus somni (strain 2336) (Haemophilus somnus), this protein is Penicillin-binding protein activator LpoA.